The following is an 816-amino-acid chain: Lon protease (816 aa).

Positions 40-244 constitute a Lon N-terminal domain; it reads VPLIAVPSHP…KVLELLYEEL (205 aa). Position 398-405 (398-405) interacts with ATP; sequence GPPGVGKT. A Lon proteolytic domain is found at 636–816; that stretch reads AMSPGMVMGL…SMKEVIKLLF (181 aa). Catalysis depends on residues S724 and K767.

The protein belongs to the peptidase S16 family. In terms of assembly, homohexamer. Organized in a ring with a central cavity.

The protein localises to the cytoplasm. The enzyme catalyses Hydrolysis of proteins in presence of ATP.. Functionally, ATP-dependent serine protease that mediates the selective degradation of mutant and abnormal proteins as well as certain short-lived regulatory proteins. Required for cellular homeostasis and for survival from DNA damage and developmental changes induced by stress. Degrades polypeptides processively to yield small peptide fragments that are 5 to 10 amino acids long. Binds to DNA in a double-stranded, site-specific manner. The sequence is that of Lon protease from Borrelia duttonii (strain Ly).